A 535-amino-acid polypeptide reads, in one-letter code: CTP synthase (535 aa).

The amidoligase domain stretch occupies residues 1–266 (MKTKFIFITG…DERVVEKLNI (266 aa)). S14 contributes to the CTP binding site. S14 provides a ligand contact to UTP. Residues 15–20 (SIGKGL) and D72 contribute to the ATP site. Residues D72 and E140 each coordinate Mg(2+). CTP contacts are provided by residues 147–149 (DIE), 187–192 (KTKPTQ), and K223. Residues 187–192 (KTKPTQ) and K223 contribute to the UTP site. Residues 292-534 (RIAIVGKYVN…VRAALIQRDA (243 aa)) enclose the Glutamine amidotransferase type-1 domain. G354 is an L-glutamine binding site. The Nucleophile; for glutamine hydrolysis role is filled by C381. L-glutamine-binding positions include 382–385 (LGMQ), E405, and R462. Catalysis depends on residues H507 and E509.

The protein belongs to the CTP synthase family. In terms of assembly, homotetramer.

The catalysed reaction is UTP + L-glutamine + ATP + H2O = CTP + L-glutamate + ADP + phosphate + 2 H(+). It carries out the reaction L-glutamine + H2O = L-glutamate + NH4(+). The enzyme catalyses UTP + NH4(+) + ATP = CTP + ADP + phosphate + 2 H(+). It participates in pyrimidine metabolism; CTP biosynthesis via de novo pathway; CTP from UDP: step 2/2. With respect to regulation, allosterically activated by GTP, when glutamine is the substrate; GTP has no effect on the reaction when ammonia is the substrate. The allosteric effector GTP functions by stabilizing the protein conformation that binds the tetrahedral intermediate(s) formed during glutamine hydrolysis. Inhibited by the product CTP, via allosteric rather than competitive inhibition. In terms of biological role, catalyzes the ATP-dependent amination of UTP to CTP with either L-glutamine or ammonia as the source of nitrogen. Regulates intracellular CTP levels through interactions with the four ribonucleotide triphosphates. This Pelobacter propionicus (strain DSM 2379 / NBRC 103807 / OttBd1) protein is CTP synthase.